We begin with the raw amino-acid sequence, 1241 residues long: MVHPVQVGKRTRMSFGKVKDVTEMPNLIEVQLDSYQWFLREGLHEVFDDINPITNFTGNLVLEFVDYKLDMDNIKYSVEECKERDATYAAPLKVSVRLQNNETGEIKEQEVFMGDFPLMTDQGTFIINGAERVIVSQLVRSPGVYYNYSIDKTGKKLYSATVIPNRGAWLEYETDSNDIIYVRIDKTRKLPITILARAMGFGSDQELLDFFGEDERFRASIEKDNTKTREEGLLEIYKRLRPGEPPTVDSAISLIDSLFFDAKRYDLSRVGRYKFNKKLALNLRIANQIAAMDVINPSTGEIMVEKGQKISRLLSEDIQNAGIKSVDILVDDKLVRVISNNFVDITKQVPFDVSDLQIKELVHYPTLKEILDNYSDEATIKEEIKKNLSRLIPKHIIKDDIFATISYELGLPYGIGYVDDIDHLGNRRLRSVGELLQNQFRIGLSRMERVVKERMTIQDQESITPQMLINIRPVAAAIKEFFGSSQLSQFMDQTNPLSELTHKRRLSALGPGGLSRERAGFEVRDVHHSHYGRMCPIETPEGPNIGLINSLATFARVNEYGFIETPYRIIDKENARATEEIRYFTADEEDQCLIAQAKEPLDENGYFVDKKVTVRYLEDVLVVPATDVDLMDVSARQIVSVATAMIPFLENDDASRALMGSNMQRQAVPLLKPQAPIVGTGIEFKAAVDSGVLPKAKNAGVVTFVSANEIRVKRDSDGGTDNYRLLKFKRSNQSSCINQRPIVNKGEIVFKNQVLADGPSTDLGEIALGKNIRMGFITWEGYNYEDAMLISEELVREDVFTSMHIEEYECEARDTKLGPEEITRDIPNVSEDALKDIDDRGIIRIGAEVRSGDILVGKVTPKGETELTAEERLLRAIFGEKAREVRDTSLRVPHGEAGIIVDIKVFTRENGDELNPGVNELVRCYIVQKRKISVGDKMAGRHGNKGVISRILPEEDMPFLPDGRPLQICLNPLGVPSRMNIGQVLEVHLGWAASKLGWHISTPVFDGATENEIEACLEKAGYNANGKTVLYDGRTGEPFDNPVTVGIMYILKLAHLVDDKIHARSTGPYSLVTQQPLGGKAQFGGQRFGEMEVWALEAYGAAHTLQEILTVKSDDVVGRVKTYEAIVKGENIPEPGVPESFKVLIKELQALCLDVKVLNENHQEVSLKEYTDDEIADLEVNIEGSEESTPVVPVVESNIEEVEVEAEDGYREDLDEIEYDENFEIETLETDLELDDFNDEH.

The protein belongs to the RNA polymerase beta chain family. In terms of assembly, the RNAP catalytic core consists of 2 alpha, 1 beta, 1 beta' and 1 omega subunit. When a sigma factor is associated with the core the holoenzyme is formed, which can initiate transcription.

The enzyme catalyses RNA(n) + a ribonucleoside 5'-triphosphate = RNA(n+1) + diphosphate. Functionally, DNA-dependent RNA polymerase catalyzes the transcription of DNA into RNA using the four ribonucleoside triphosphates as substrates. In Clostridium botulinum (strain Alaska E43 / Type E3), this protein is DNA-directed RNA polymerase subunit beta.